A 421-amino-acid chain; its full sequence is Histidine--tRNA ligase (421 aa).

Belongs to the class-II aminoacyl-tRNA synthetase family.

Its subcellular location is the cytoplasm. It carries out the reaction tRNA(His) + L-histidine + ATP = L-histidyl-tRNA(His) + AMP + diphosphate + H(+). The protein is Histidine--tRNA ligase of Pyrobaculum islandicum (strain DSM 4184 / JCM 9189 / GEO3).